The chain runs to 393 residues: Carbamoyl phosphate synthase small chain (393 aa).

The interval 1–194 (MSKDTTTYQG…TYVIEAEGEE (194 aa)) is CPSase. Residues Ser-61, Gly-245, and Gly-247 each contribute to the L-glutamine site. The region spanning 195-390 (RHTVVAYDLG…VELMDADAQK (196 aa)) is the Glutamine amidotransferase type-1 domain. Catalysis depends on Cys-273, which acts as the Nucleophile. 5 residues coordinate L-glutamine: Phe-274, Gln-277, Asn-315, Gly-317, and Phe-318. Residues His-363 and Glu-365 contribute to the active site.

The protein belongs to the CarA family. In terms of assembly, composed of two chains; the small (or glutamine) chain promotes the hydrolysis of glutamine to ammonia, which is used by the large (or ammonia) chain to synthesize carbamoyl phosphate. Tetramer of heterodimers (alpha,beta)4.

The enzyme catalyses hydrogencarbonate + L-glutamine + 2 ATP + H2O = carbamoyl phosphate + L-glutamate + 2 ADP + phosphate + 2 H(+). It carries out the reaction L-glutamine + H2O = L-glutamate + NH4(+). The protein operates within amino-acid biosynthesis; L-arginine biosynthesis; carbamoyl phosphate from bicarbonate: step 1/1. Its pathway is pyrimidine metabolism; UMP biosynthesis via de novo pathway; (S)-dihydroorotate from bicarbonate: step 1/3. Functionally, small subunit of the glutamine-dependent carbamoyl phosphate synthetase (CPSase). CPSase catalyzes the formation of carbamoyl phosphate from the ammonia moiety of glutamine, carbonate, and phosphate donated by ATP, constituting the first step of 2 biosynthetic pathways, one leading to arginine and/or urea and the other to pyrimidine nucleotides. The small subunit (glutamine amidotransferase) binds and cleaves glutamine to supply the large subunit with the substrate ammonia. This Corynebacterium glutamicum (strain ATCC 13032 / DSM 20300 / JCM 1318 / BCRC 11384 / CCUG 27702 / LMG 3730 / NBRC 12168 / NCIMB 10025 / NRRL B-2784 / 534) protein is Carbamoyl phosphate synthase small chain.